The chain runs to 460 residues: ATP synthase subunit beta (460 aa).

150 to 157 (GGAGVGKT) lines the ATP pocket.

It belongs to the ATPase alpha/beta chains family. F-type ATPases have 2 components, CF(1) - the catalytic core - and CF(0) - the membrane proton channel. CF(1) has five subunits: alpha(3), beta(3), gamma(1), delta(1), epsilon(1). CF(0) has three main subunits: a(1), b(2) and c(9-12). The alpha and beta chains form an alternating ring which encloses part of the gamma chain. CF(1) is attached to CF(0) by a central stalk formed by the gamma and epsilon chains, while a peripheral stalk is formed by the delta and b chains.

The protein localises to the cell inner membrane. The catalysed reaction is ATP + H2O + 4 H(+)(in) = ADP + phosphate + 5 H(+)(out). Functionally, produces ATP from ADP in the presence of a proton gradient across the membrane. The catalytic sites are hosted primarily by the beta subunits. The chain is ATP synthase subunit beta from Yersinia enterocolitica serotype O:8 / biotype 1B (strain NCTC 13174 / 8081).